Here is a 336-residue protein sequence, read N- to C-terminus: Phospho-N-acetylmuramoyl-pentapeptide-transferase (336 aa).

The next 10 membrane-spanning stretches (helical) occupy residues 3–23 (LSIMAGVIAFVLTVIAIPRFI), 52–72 (MGGTVFLIVALLVSLIFSIIL), 79–99 (NLGATFGILSVVLIYGIIGFL), 123–143 (LIAGLIFYFVHVLPSGTSAIN), 144–164 (IFGFYLEVGYLYAFFVLFWVV), 175–195 (GIDGLASISVVISLITYGIIA), 201–221 (FDILLIIVIMIGALLGFFVFN), 227–247 (VFMGDVGSLALGAMLAAISIA), 255–275 (LFIGFVYVFETSSVMLQVAYF), and 315–335 (VDAFLWAIGIFMSAITLAILY).

It belongs to the glycosyltransferase 4 family. MraY subfamily. Mg(2+) serves as cofactor.

Its subcellular location is the cell membrane. The enzyme catalyses UDP-N-acetyl-alpha-D-muramoyl-L-alanyl-gamma-D-glutamyl-L-lysyl-D-alanyl-D-alanine + di-trans,octa-cis-undecaprenyl phosphate = Mur2Ac(oyl-L-Ala-gamma-D-Glu-L-Lys-D-Ala-D-Ala)-di-trans,octa-cis-undecaprenyl diphosphate + UMP. It functions in the pathway cell wall biogenesis; peptidoglycan biosynthesis. Catalyzes the initial step of the lipid cycle reactions in the biosynthesis of the cell wall peptidoglycan: transfers peptidoglycan precursor phospho-MurNAc-pentapeptide from UDP-MurNAc-pentapeptide onto the lipid carrier undecaprenyl phosphate, yielding undecaprenyl-pyrophosphoryl-MurNAc-pentapeptide, known as lipid I. The chain is Phospho-N-acetylmuramoyl-pentapeptide-transferase from Streptococcus agalactiae serotype Ia (strain ATCC 27591 / A909 / CDC SS700).